Here is a 312-residue protein sequence, read N- to C-terminus: DNA-directed RNA polymerase subunit alpha (312 aa).

Residues 1–226 (MIEFEKPKIT…DHLNLFVDLS (226 aa)) form an alpha N-terminal domain (alpha-NTD) region. The segment at 243–312 (TERVLDKIIE…ELGLSLKKRK (70 aa)) is alpha C-terminal domain (alpha-CTD).

It belongs to the RNA polymerase alpha chain family. Homodimer. The RNAP catalytic core consists of 2 alpha, 1 beta, 1 beta' and 1 omega subunit. When a sigma factor is associated with the core the holoenzyme is formed, which can initiate transcription.

It carries out the reaction RNA(n) + a ribonucleoside 5'-triphosphate = RNA(n+1) + diphosphate. In terms of biological role, DNA-dependent RNA polymerase catalyzes the transcription of DNA into RNA using the four ribonucleoside triphosphates as substrates. The polypeptide is DNA-directed RNA polymerase subunit alpha (Lactococcus lactis subsp. lactis (strain IL1403) (Streptococcus lactis)).